The sequence spans 200 residues: MPENVVNPVRTATVSRKTKETDITVTVLIDGTGHGSINSGVAFLDHMLANFCRHSGFDMSLVCNGDLDVDDHHSVEDVALVIGSAISEALLDKTGLQRYGWAIIPMDEALARCALDLGGRSYCVFNAEFKRPVIEGFSTEMVEHFFVSLSRTMQANIHLAILEGKNTHHKIEALFKSFAYAMKDAVRITGTTIPSTKGKL.

Belongs to the imidazoleglycerol-phosphate dehydratase family.

It localises to the cytoplasm. It carries out the reaction D-erythro-1-(imidazol-4-yl)glycerol 3-phosphate = 3-(imidazol-4-yl)-2-oxopropyl phosphate + H2O. Its pathway is amino-acid biosynthesis; L-histidine biosynthesis; L-histidine from 5-phospho-alpha-D-ribose 1-diphosphate: step 6/9. This chain is Imidazoleglycerol-phosphate dehydratase, found in Chlorobium phaeobacteroides (strain DSM 266 / SMG 266 / 2430).